We begin with the raw amino-acid sequence, 239 residues long: 1-(5-phosphoribosyl)-5-[(5-phosphoribosylamino)methylideneamino] imidazole-4-carboxamide isomerase (239 aa).

The Proton acceptor role is filled by D8. D130 functions as the Proton donor in the catalytic mechanism.

This sequence belongs to the HisA/HisF family.

It localises to the cytoplasm. The enzyme catalyses 1-(5-phospho-beta-D-ribosyl)-5-[(5-phospho-beta-D-ribosylamino)methylideneamino]imidazole-4-carboxamide = 5-[(5-phospho-1-deoxy-D-ribulos-1-ylimino)methylamino]-1-(5-phospho-beta-D-ribosyl)imidazole-4-carboxamide. It participates in amino-acid biosynthesis; L-histidine biosynthesis; L-histidine from 5-phospho-alpha-D-ribose 1-diphosphate: step 4/9. The protein is 1-(5-phosphoribosyl)-5-[(5-phosphoribosylamino)methylideneamino] imidazole-4-carboxamide isomerase of Lachnoclostridium phytofermentans (strain ATCC 700394 / DSM 18823 / ISDg) (Clostridium phytofermentans).